A 465-amino-acid chain; its full sequence is Putative apoptosis inhibitor ORF106 (465 aa).

The BIR repeat unit spans residues 291-357 (RECSFSTWPK…MEKETCGWLE (67 aa)). Residues 373 to 382 (EGGEDKEEDG) show a composition bias toward acidic residues. The interval 373 to 393 (EGGEDKEEDGGGGGVIEFPKN) is disordered. An RING-type zinc finger spans residues 405–447 (CKACYERKADIAFIPCGHVFSCNICTMEMFASYKKKKRCPMCR).

The protein is Putative apoptosis inhibitor ORF106 of Magallana gigas (Pacific oyster).